The sequence spans 363 residues: Phosphoserine aminotransferase (363 aa).

R42 serves as a coordination point for L-glutamate. Pyridoxal 5'-phosphate-binding positions include G76–R77, W102, T156, D175, and Q198. K199 carries the N6-(pyridoxal phosphate)lysine modification. Residue N240 to T241 coordinates pyridoxal 5'-phosphate.

This sequence belongs to the class-V pyridoxal-phosphate-dependent aminotransferase family. SerC subfamily. Homodimer. Pyridoxal 5'-phosphate serves as cofactor.

Its subcellular location is the cytoplasm. The enzyme catalyses O-phospho-L-serine + 2-oxoglutarate = 3-phosphooxypyruvate + L-glutamate. It catalyses the reaction 4-(phosphooxy)-L-threonine + 2-oxoglutarate = (R)-3-hydroxy-2-oxo-4-phosphooxybutanoate + L-glutamate. The protein operates within amino-acid biosynthesis; L-serine biosynthesis; L-serine from 3-phospho-D-glycerate: step 2/3. It participates in cofactor biosynthesis; pyridoxine 5'-phosphate biosynthesis; pyridoxine 5'-phosphate from D-erythrose 4-phosphate: step 3/5. In terms of biological role, catalyzes the reversible conversion of 3-phosphohydroxypyruvate to phosphoserine and of 3-hydroxy-2-oxo-4-phosphonooxybutanoate to phosphohydroxythreonine. In Shewanella sp. (strain ANA-3), this protein is Phosphoserine aminotransferase.